The following is a 369-amino-acid chain: Tetraacyldisaccharide 4'-kinase (369 aa).

An ATP-binding site is contributed by 68–75 (VVGGTGKT).

The protein belongs to the LpxK family.

It catalyses the reaction a lipid A disaccharide + ATP = a lipid IVA + ADP + H(+). The protein operates within glycolipid biosynthesis; lipid IV(A) biosynthesis; lipid IV(A) from (3R)-3-hydroxytetradecanoyl-[acyl-carrier-protein] and UDP-N-acetyl-alpha-D-glucosamine: step 6/6. Its function is as follows. Transfers the gamma-phosphate of ATP to the 4'-position of a tetraacyldisaccharide 1-phosphate intermediate (termed DS-1-P) to form tetraacyldisaccharide 1,4'-bis-phosphate (lipid IVA). The polypeptide is Tetraacyldisaccharide 4'-kinase (Chlamydia muridarum (strain MoPn / Nigg)).